Reading from the N-terminus, the 105-residue chain is uncharacterized protein (105 aa).

Positions 2–42 (QVLIGTKLVTEGIDIKQLMMVIMLDNRLNIIELIQGVGRLR) constitute a Helicase C-terminal domain.

It belongs to the helicase family. Yeast subtelomeric Y' repeat subfamily.

This is an uncharacterized protein from Saccharomyces cerevisiae (strain ATCC 204508 / S288c) (Baker's yeast).